A 756-amino-acid polypeptide reads, in one-letter code: Rab11 family-interacting protein 3 (756 aa).

The span at 1–24 shows a compositional bias: pro residues; the sequence is MASAPPASPPGSEPPGPDPEPGGP. The disordered stretch occupies residues 1–204; sequence MASAPPASPP…SEPVGSQEDG (204 aa). The important for binding to DYNC1LI1 stretch occupies residues 2-435; sequence ASAPPASPPG…RLSSKKVARY (434 aa). The segment covering 27-39 has biased composition (low complexity); it reads PGAAQLAPGPAEL. S52 carries the phosphoserine modification. Residues 53 to 68 show a composition bias toward low complexity; sequence PGLDEPAPGAAADGGA. The span at 84–94 shows a compositional bias: pro residues; the sequence is DPGPSAPPPRS. Residue S102 is modified to Phosphoserine; by CDK1. 2 consecutive EF-hand domains span residues 202-237 and 234-269; these read EDGP…YGAE and YGAE…IRNG. 7 residues coordinate Ca(2+): D215, D217, D219, D226, D247, S249, and D258. S281, S348, S488, S538, S647, and S648 each carry phosphoserine. The segment at 484 to 588 is ARF-binding domain (ABD); that stretch reads GEQHSRLRQE…LLDEIESLTL (105 aa). Positions 485–694 form a coiled coil; the sequence is EQHSRLRQEN…NGQIITLSIQ (210 aa). Residues 645 to 664 are disordered; sequence RSSSMGLQEYHSRARESELE. The segment covering 654–664 has biased composition (basic and acidic residues); it reads YHSRARESELE. An FIP-RBD domain is found at 694 to 756; that stretch reads QGAKSLFSTA…ETNPSILEVK (63 aa).

In terms of assembly, homodimer. Interacts with RAB11A; the interaction is direct and is required for the recruitment to endosomes. Interacts with RAB11B. Forms a ternary complex with RAB11A and dynein intermediate chain DYNC1LI1; RAB11FIP3 links RAB11A to dynein and the interaction regulates endocytic trafficking. Interacts with dynein intermediate chain and dynactin (DCTN1); the interaction activates dynein processivity. Interacts with ARF6 and EXOC7; the interaction serves for recruitment and tethering of recycling endosomes-derived vesicles to the cleavage furrow/midbody. Interacts with RACGAP1/MgcRacGAP; the interaction occurs at late telophase and is required for recruitment and tethering of recycling endosomes-derived vesicles to the cleavage furrow/midbody. Forms a complex with RAB11A and Rabin8/RAB3IP, probably a heterohexamer with two of each protein subunit, where RAB3IP and RAB11FIP3 simultaneously bind to RAB11A; the complex promotes preciliary trafficking. Forms a complex containing RAB11A, ASAP1, RAB3IP, RAP11FIP3 and ARF4; the complex promotes preciliary trafficking; the complex binds to RHO in photoreceptor cells and promotes RHO ciliary transport. Interacts with RAB11FIP4. Interacts with RAB25. In terms of processing, phosphorylated at Ser-102 by CDK1 during metaphase, and dephosphorylated as cells enter telophase.

The protein resides in the endosome membrane. Its subcellular location is the recycling endosome membrane. It is found in the cytoplasm. The protein localises to the cytoskeleton. It localises to the microtubule organizing center. The protein resides in the centrosome. Its subcellular location is the cleavage furrow. It is found in the midbody. The protein localises to the golgi apparatus membrane. It localises to the golgi apparatus. The protein resides in the trans-Golgi network membrane. Downstream effector molecule for Rab11 GTPase which is involved in endocytic trafficking, cytokinesis and intracellular ciliogenesis by participating in membrane delivery. Recruited by Rab11 to endosomes where it links Rab11 to dynein motor complex. The functional Rab11-RAB11FIP3-dynein complex regulates the movement of peripheral sorting endosomes (SE) along microtubule tracks toward the microtubule organizing center/centrosome, generating the endocytic recycling compartment (ERC) during interphase of cell cycle. Facilitates the interaction between dynein and dynactin and activates dynein processivity. Binding with ASAP1 is needed to regulate the pericentrosomal localization of recycling endosomes. The Rab11-RAB11FIP3 complex is also implicated in the transport during telophase of vesicles derived from recycling endosomes to the cleavage furrow via centrosome-anchored microtubules, where the vesicles function to deliver membrane during late cytokinesis and abscission. The recruitment of Rab11-RAB11FIP3-containing endosomes to the cleavage furrow and tethering to the midbody is co-mediated by RAB11FIP3 interaction with ARF6-exocyst and RACGAP1-MKLP1 tethering complexes. Also involved in the Rab11-Rabin8-Rab8 ciliogenesis cascade by facilitating the orderly assembly of a ciliary targeting complex containing Rab11, ASAP1, Rabin8/RAB3IP, RAB11FIP3 and ARF4, which directs preciliary vesicle trafficking to mother centriole and ciliogenesis initiation. Also promotes the activity of Rab11 and ASAP1 in the ARF4-dependent Golgi-to-cilia transport of the sensory receptor rhodopsin. Competes with WDR44 for binding to Rab11, which controls intracellular ciliogenesis pathway. May play a role in breast cancer cell motility by regulating actin cytoskeleton. The polypeptide is Rab11 family-interacting protein 3 (Homo sapiens (Human)).